A 287-amino-acid chain; its full sequence is 26S proteasome non-ATPase regulatory subunit 8 (287 aa).

Serine 43 carries the post-translational modification Phosphoserine. Residues 99–268 (PSFERYMAQL…QQKPEDTTIP (170 aa)) form the PCI domain. Residue lysine 234 forms a Glycyl lysine isopeptide (Lys-Gly) (interchain with G-Cter in SUMO2) linkage.

It belongs to the proteasome subunit S14 family. As to quaternary structure, component of the 19S proteasome regulatory particle complex. The 26S proteasome consists of a 20S core particle (CP) and two 19S regulatory subunits (RP). The regulatory particle is made of a lid composed of 9 subunits including PSMD8, a base containing 6 ATPases and few additional components. Interacts with DDI2. Interacts with TASOR.

Component of the 26S proteasome, a multiprotein complex involved in the ATP-dependent degradation of ubiquitinated proteins. This complex plays a key role in the maintenance of protein homeostasis by removing misfolded or damaged proteins, which could impair cellular functions, and by removing proteins whose functions are no longer required. Therefore, the proteasome participates in numerous cellular processes, including cell cycle progression, apoptosis, or DNA damage repair. The protein is 26S proteasome non-ATPase regulatory subunit 8 (PSMD8) of Bos taurus (Bovine).